The sequence spans 240 residues: uncharacterized protein (240 aa).

It localises to the mitochondrion. This is an uncharacterized protein from Arabidopsis thaliana (Mouse-ear cress).